The primary structure comprises 374 residues: Cysteine-type anaerobic sulfatase-maturating enzyme (374 aa).

Residues 1-227 (MKSLSMLIKP…LNKLFDLWFK (227 aa)) form the Radical SAM core domain. [4Fe-4S] cluster contacts are provided by cysteine 15 and cysteine 19. Residue tyrosine 21 participates in S-adenosyl-L-methionine binding. Cysteine 22 is a binding site for [4Fe-4S] cluster. S-adenosyl-L-methionine-binding residues include glycine 66, serine 122, arginine 134, and leucine 195. The [4Fe-4S] cluster site is built by cysteine 255, cysteine 261, and cysteine 276. Aspartate 277 functions as the Proton acceptor in the catalytic mechanism. The [4Fe-4S] cluster site is built by cysteine 317, cysteine 320, cysteine 326, cysteine 330, and cysteine 348.

This sequence belongs to the radical SAM superfamily. Anaerobic sulfatase-maturating enzyme family. It depends on [4Fe-4S] cluster as a cofactor.

It carries out the reaction L-cysteinyl-[sulfatase] + S-adenosyl-L-methionine + H2O = 3-oxo-L-alanyl-[sulfatase] + hydrogen sulfide + 5'-deoxyadenosine + L-methionine + 2 H(+). Its pathway is protein modification; sulfatase oxidation. In terms of biological role, involved in 'Cys-type' sulfatase maturation under anaerobic conditions. Catalyzes the post-translational modification of cysteine into 3-oxoalanine (also known as C(alpha)-formylglycine (FGly)), by a free radical chemical mechanism initiated via the reductive cleavage of S-adenosyl-L-methionine (SAM). In Clostridium novyi (strain NT), this protein is Cysteine-type anaerobic sulfatase-maturating enzyme.